The chain runs to 151 residues: MSTPDNRSVNFFSLFRRGQHYSKTWPLEKRLAPVFVENRVIKMTCYAIRFMPPIAVFTLCWQIALGGQLGPAVATALFALSLPMQGLWWLGKRSVTPLPPAILNWFYDVRGKLQESGQVLAPVEGKPDYQALADTLKRAFKQLDKTFLDDL.

2 helical membrane-spanning segments follow: residues 46–65 and 69–91; these read YAIRFMPPIAVFTLCWQIAL and LGPAVATALFALSLPMQGLWWLG.

This sequence belongs to the UPF0208 family.

The protein localises to the cell inner membrane. The protein is UPF0208 membrane protein YfbV of Escherichia coli O1:K1 / APEC.